The chain runs to 412 residues: Serine hydroxymethyltransferase (412 aa).

(6S)-5,6,7,8-tetrahydrofolate-binding positions include L117 and 121–123; that span reads GHL. K226 carries the post-translational modification N6-(pyridoxal phosphate)lysine.

It belongs to the SHMT family. In terms of assembly, homodimer. Requires pyridoxal 5'-phosphate as cofactor.

It is found in the cytoplasm. The catalysed reaction is (6R)-5,10-methylene-5,6,7,8-tetrahydrofolate + glycine + H2O = (6S)-5,6,7,8-tetrahydrofolate + L-serine. It participates in one-carbon metabolism; tetrahydrofolate interconversion. It functions in the pathway amino-acid biosynthesis; glycine biosynthesis; glycine from L-serine: step 1/1. Its function is as follows. Catalyzes the reversible interconversion of serine and glycine with tetrahydrofolate (THF) serving as the one-carbon carrier. This reaction serves as the major source of one-carbon groups required for the biosynthesis of purines, thymidylate, methionine, and other important biomolecules. Also exhibits THF-independent aldolase activity toward beta-hydroxyamino acids, producing glycine and aldehydes, via a retro-aldol mechanism. This is Serine hydroxymethyltransferase from Staphylococcus aureus (strain USA300).